The chain runs to 88 residues: Small ribosomal subunit protein uS15 (88 aa).

The protein belongs to the universal ribosomal protein uS15 family. Part of the 30S ribosomal subunit. Forms a bridge to the 50S subunit in the 70S ribosome, contacting the 23S rRNA.

In terms of biological role, one of the primary rRNA binding proteins, it binds directly to 16S rRNA where it helps nucleate assembly of the platform of the 30S subunit by binding and bridging several RNA helices of the 16S rRNA. Functionally, forms an intersubunit bridge (bridge B4) with the 23S rRNA of the 50S subunit in the ribosome. This is Small ribosomal subunit protein uS15 from Geobacter sp. (strain M21).